The following is a 452-amino-acid chain: Lamina-associated polypeptide 2, isoforms beta/delta/epsilon/gamma (452 aa).

The segment at 1–409 (MPEFLEDPSV…KSEKTKKRRS (409 aa)) is nucleoplasmic. The LEM-like domain maps to 5 to 48 (LEDPSVLTKDKLKSELVANNVTLPAGEQRKDVYVQLYLQHLTAR). Disordered stretches follow at residues 48 to 111 (RNRP…DLDV) and 149 to 263 (REQG…RVET). The linker stretch occupies residues 49–108 (NRPPLAAGANSKGPPDFSSDEEREPTPVLGSGASVGRGRGAVGRKATKKTDKPRLEDKDD). A phosphoserine mark is found at S59, S66, and S67. T74 is modified (phosphothreonine). 2 positions are modified to phosphoserine: S79 and S82. Omega-N-methylarginine is present on residues R85 and R87. The span at 96 to 105 (KKTDKPRLED) shows a compositional bias: basic and acidic residues. One can recognise an LEM domain in the interval 109-153 (LDVTELSNEELLDQLVRYGVNPGPIVGTTRKLYEKKLLKLREQGT). Positions 137–242 (TRKLYEKKLL…TSGSSTGGPL (106 aa)) are NAKAP95-binding N. Phosphothreonine is present on T153. Residues 154 to 177 (ESRSSTPLPTVSSSAENTRQNGSN) show a composition bias toward polar residues. Residues S155 and S158 each carry the phosphoserine modification. A phosphothreonine mark is found at T159 and T163. Phosphoserine occurs at positions 165, 167, and 176. Over residues 178–202 (DSDRYSDNDEDSKIELKLEKREPLK) the composition is skewed to basic and acidic residues. The residue at position 179 (S179) is a Phosphoserine; by PKC. 2 positions are modified to phosphoserine: S183 and S189. The residue at position 206 (K206) is an N6-acetyllysine. Residue T210 is modified to Phosphothreonine. 2 positions are modified to phosphoserine: S221 and S223. Over residues 226-240 (GVTETEWTSGSSTGG) the composition is skewed to low complexity. A phosphoserine mark is found at S249, S253, S264, S291, S305, and S306. Residues 298 to 370 (TGNFKHASSI…SCRRPIKGAA (73 aa)) form a binds lamins B region. Residues 299–373 (GNFKHASSIL…RPIKGAAGRP (75 aa)) form an NAKAP95-binding C region. The residue at position 311 (T311) is a Phosphothreonine. S314 carries the post-translational modification Phosphoserine. At R319 the chain carries Citrulline. Phosphoserine is present on residues S361, S377, and S384. The residue at position 388 (K388) is an N6-acetyllysine. K400 participates in a covalent cross-link: Glycyl lysine isopeptide (Lys-Gly) (interchain with G-Cter in SUMO2). S401 is modified (phosphoserine). A helical; Signal-anchor for type II membrane protein transmembrane segment spans residues 410–430 (VPMWIKMLLFALVAVFLFLVY). Residues 431–452 (QAMETNQGNPFTNFLQDTKISN) lie on the Lumenal side of the membrane.

Belongs to the LEM family. In terms of assembly, interacts with LMNB1, LMNB2, BANF1, AKAP8L, GMCL and chromosomes. Post-translationally, mitosis-specific phosphorylation specifically abolishes its binding to lamin B and chromosomes. In terms of processing, citrullinated by PADI4.

The protein resides in the nucleus inner membrane. It localises to the chromosome. Its function is as follows. May help direct the assembly of the nuclear lamina and thereby help maintain the structural organization of the nuclear envelope. Possible receptor for attachment of lamin filaments to the inner nuclear membrane. May be involved in the control of initiation of DNA replication through its interaction with NAKAP95. The sequence is that of Lamina-associated polypeptide 2, isoforms beta/delta/epsilon/gamma (Tmpo) from Mus musculus (Mouse).